Consider the following 303-residue polypeptide: UDP-3-O-acyl-N-acetylglucosamine deacetylase (303 aa).

Histidine 78, histidine 237, and aspartate 241 together coordinate Zn(2+). Histidine 264 acts as the Proton donor in catalysis.

It belongs to the LpxC family. Zn(2+) serves as cofactor.

The catalysed reaction is a UDP-3-O-[(3R)-3-hydroxyacyl]-N-acetyl-alpha-D-glucosamine + H2O = a UDP-3-O-[(3R)-3-hydroxyacyl]-alpha-D-glucosamine + acetate. It functions in the pathway glycolipid biosynthesis; lipid IV(A) biosynthesis; lipid IV(A) from (3R)-3-hydroxytetradecanoyl-[acyl-carrier-protein] and UDP-N-acetyl-alpha-D-glucosamine: step 2/6. Its function is as follows. Catalyzes the hydrolysis of UDP-3-O-myristoyl-N-acetylglucosamine to form UDP-3-O-myristoylglucosamine and acetate, the committed step in lipid A biosynthesis. The polypeptide is UDP-3-O-acyl-N-acetylglucosamine deacetylase (Saccharophagus degradans (strain 2-40 / ATCC 43961 / DSM 17024)).